We begin with the raw amino-acid sequence, 123 residues long: Small ribosomal subunit protein uS12 (123 aa).

Asp89 carries the 3-methylthioaspartic acid modification. The tract at residues 104-123 (TQGVKDRRQRRSKYGAKRPK) is disordered. A compositionally biased stretch (basic residues) spans 110 to 123 (RRQRRSKYGAKRPK).

It belongs to the universal ribosomal protein uS12 family. Part of the 30S ribosomal subunit. Contacts proteins S8 and S17. May interact with IF1 in the 30S initiation complex.

With S4 and S5 plays an important role in translational accuracy. Its function is as follows. Interacts with and stabilizes bases of the 16S rRNA that are involved in tRNA selection in the A site and with the mRNA backbone. Located at the interface of the 30S and 50S subunits, it traverses the body of the 30S subunit contacting proteins on the other side and probably holding the rRNA structure together. The combined cluster of proteins S8, S12 and S17 appears to hold together the shoulder and platform of the 30S subunit. This is Small ribosomal subunit protein uS12 from Rhodospirillum rubrum (strain ATCC 11170 / ATH 1.1.1 / DSM 467 / LMG 4362 / NCIMB 8255 / S1).